The chain runs to 512 residues: Cytochrome P450 monooxygenase pbrB (512 aa).

The helical transmembrane segment at 6 to 29 threads the bilayer; the sequence is LSFPAAVGAAFGAFAIYVVARCIY. Cys-452 contributes to the heme binding site.

The protein belongs to the cytochrome P450 family. Requires heme as cofactor.

It is found in the membrane. The protein operates within secondary metabolite biosynthesis; terpenoid biosynthesis. In terms of biological role, cytochrome P450 monooxygenase; part of the gene cluster that mediates the biosynthesis of the sesquiterpenoid aspterric acid (AA), an inhibitor of dihydroxy-acid dehydratase (DHAD) effective as an herbicide. PbrB catalyzes the second step within the pathway and converts (-)-daucane produced by the terpene cyclase pbrA into an alpha-epoxy carboxylate intermediate which is further converted into the tricyclic aspterric acid by the cytochrome P450 monooxygenase pbrC. This chain is Cytochrome P450 monooxygenase pbrB, found in Penicillium brasilianum.